The primary structure comprises 274 residues: Large ribosomal subunit protein uL2cz/uL2cy (274 aa).

2 disordered regions span residues 1-21 (MAIH…VDSQ) and 225-274 (PVDH…RRSK).

The protein belongs to the universal ribosomal protein uL2 family. As to quaternary structure, part of the 50S ribosomal subunit.

The protein resides in the plastid. The protein localises to the chloroplast. In Arabidopsis thaliana (Mouse-ear cress), this protein is Large ribosomal subunit protein uL2cz/uL2cy (rpl2-A).